The sequence spans 89 residues: MEYQYPLDYDWSNEEMVTMVKFYEAIEKAYEKGIIREELMGLYRRFKEIVPSKAEEKKIDKEFQEVSGYSIYRAIQRAKEVEEQKLVKI.

It belongs to the UPF0223 family.

This Bacillus cereus (strain B4264) protein is UPF0223 protein BCB4264_A4064.